Reading from the N-terminus, the 510-residue chain is Lysine--tRNA ligase (510 aa).

Glu420 and Glu427 together coordinate Mg(2+).

The protein belongs to the class-II aminoacyl-tRNA synthetase family. In terms of assembly, homodimer. It depends on Mg(2+) as a cofactor.

It is found in the cytoplasm. The enzyme catalyses tRNA(Lys) + L-lysine + ATP = L-lysyl-tRNA(Lys) + AMP + diphosphate. The polypeptide is Lysine--tRNA ligase (lysS) (Vibrio cholerae serotype O1 (strain ATCC 39315 / El Tor Inaba N16961)).